The primary structure comprises 490 residues: Tryptophan 5-hydroxylase 2 (490 aa).

At S19 the chain carries Phosphoserine. Polar residues predominate over residues 31-42 (LGSSTLNKPNSG). The disordered stretch occupies residues 31–58 (LGSSTLNKPNSGKNDDKGNKGSSKREAA). Residues 43–58 (KNDDKGNKGSSKREAA) show a composition bias toward basic and acidic residues. The ACT domain maps to 65 to 140 (AVVFSLKNEV…TIVTLNPPEN (76 aa)). 3 residues coordinate Fe cation: H318, H323, and E363.

Belongs to the biopterin-dependent aromatic amino acid hydroxylase family. In terms of assembly, interacts with DNAJC12. Fe(2+) is required as a cofactor. In terms of tissue distribution, brain specific.

The enzyme catalyses (6R)-L-erythro-5,6,7,8-tetrahydrobiopterin + L-tryptophan + O2 = 5-hydroxy-L-tryptophan + (4aS,6R)-4a-hydroxy-L-erythro-5,6,7,8-tetrahydrobiopterin. It functions in the pathway aromatic compound metabolism; serotonin biosynthesis; serotonin from L-tryptophan: step 1/2. This chain is Tryptophan 5-hydroxylase 2 (TPH2), found in Homo sapiens (Human).